The primary structure comprises 541 residues: DNA polymerase epsilon subunit B (541 aa).

Belongs to the DNA polymerase epsilon subunit B family. As to quaternary structure, heterotetramer. Consists of four subunits: POL2, DPB2, DPB3 and DPB4.

It localises to the nucleus. In terms of biological role, as accessory component of the DNA polymerase epsilon (DNA polymerase II) participates in chromosomal DNA replication. The protein is DNA polymerase epsilon subunit B (DPB2) of Cryptococcus neoformans var. neoformans serotype D (strain B-3501A) (Filobasidiella neoformans).